A 99-amino-acid chain; its full sequence is Putative pterin-4-alpha-carbinolamine dehydratase (99 aa).

It belongs to the pterin-4-alpha-carbinolamine dehydratase family.

The catalysed reaction is (4aS,6R)-4a-hydroxy-L-erythro-5,6,7,8-tetrahydrobiopterin = (6R)-L-erythro-6,7-dihydrobiopterin + H2O. The protein is Putative pterin-4-alpha-carbinolamine dehydratase of Bradyrhizobium sp. (strain BTAi1 / ATCC BAA-1182).